A 282-amino-acid polypeptide reads, in one-letter code: MGRRPCCSKEGLNRGAWSAREDKVLKDYINTHGEGKWRDLPRRAGLKRCGKSCRLRWLNYLRPDIKRGNISYDEEELIIRLHKLLGNRWSLIAGRLPGRTDNEIKNYWNTYLSKKVNSQTHQHEIDGDQVPLKKTKEEEVSEKPQVIRTKAVRCTKAYMLTTHLDDNSLITNKCPEPISTERSYSPSATFLDIPMDFDMDEFLAGFECDRNFDQVCDGENPLRLDDKMEEEWRESYECLQLNVDSDIRALSSALLDSEDDWKQNGGKDELMGGGNGGPSSVS.

HTH myb-type domains follow at residues 9–61 (KEGL…LNYL) and 62–116 (RPDI…SKKV). 2 DNA-binding regions (H-T-H motif) span residues 37 to 61 (WRDLPRRAGLKRCGKSCRLRWLNYL) and 89 to 112 (WSLIAGRLPGRTDNEIKNYWNTYL). A disordered region spans residues 258–282 (EDDWKQNGGKDELMGGGNGGPSSVS). The segment covering 260-270 (DWKQNGGKDEL) has biased composition (basic and acidic residues). Residues 271–282 (MGGGNGGPSSVS) show a composition bias toward gly residues.

The protein localises to the nucleus. Transcription activator involved in the spatiotemporal regulation of flavonoid biosynthesis specifically in the corms of Montbretia. Activates the promoters of enzymes involved in the biosynthesis of the flavonol kaempferol and the flavonol-glycoside kaempferol-rhamnoside. This Crocosmia x crocosmiiflora (Montbretia) protein is Transcription factor MYB1.